The following is a 95-amino-acid chain: Aspartyl/glutamyl-tRNA(Asn/Gln) amidotransferase subunit C (95 aa).

The protein belongs to the GatC family. In terms of assembly, heterotrimer of A, B and C subunits.

It carries out the reaction L-glutamyl-tRNA(Gln) + L-glutamine + ATP + H2O = L-glutaminyl-tRNA(Gln) + L-glutamate + ADP + phosphate + H(+). The enzyme catalyses L-aspartyl-tRNA(Asn) + L-glutamine + ATP + H2O = L-asparaginyl-tRNA(Asn) + L-glutamate + ADP + phosphate + 2 H(+). In terms of biological role, allows the formation of correctly charged Asn-tRNA(Asn) or Gln-tRNA(Gln) through the transamidation of misacylated Asp-tRNA(Asn) or Glu-tRNA(Gln) in organisms which lack either or both of asparaginyl-tRNA or glutaminyl-tRNA synthetases. The reaction takes place in the presence of glutamine and ATP through an activated phospho-Asp-tRNA(Asn) or phospho-Glu-tRNA(Gln). In Marinobacter nauticus (strain ATCC 700491 / DSM 11845 / VT8) (Marinobacter aquaeolei), this protein is Aspartyl/glutamyl-tRNA(Asn/Gln) amidotransferase subunit C.